A 180-amino-acid chain; its full sequence is MKDVTYYLISLASQSPAGSFGLNTNNLVTTLINIAVVLSLLIVFGKGFLRDFLDTRKNRIVNTIQISDELYSGAVEKLEKAQARLCKVEKEAKQLRVTGYSEIEQEKLNLINSTYKTLERLEKKKKETCSFEQQRAINDVRQWVLQQTLQRVLKTLNGSLNPELHLHTIRVNISMLGTLK.

Residues 27–49 (LVTTLINIAVVLSLLIVFGKGFL) form a helical membrane-spanning segment.

The protein belongs to the ATPase B chain family. In terms of assembly, F-type ATPases have 2 components, F(1) - the catalytic core - and F(0) - the membrane proton channel. F(1) has five subunits: alpha(3), beta(3), gamma(1), delta(1), epsilon(1). F(0) has four main subunits: a(1), b(1), b'(1) and c(10-14). The alpha and beta chains form an alternating ring which encloses part of the gamma chain. F(1) is attached to F(0) by a central stalk formed by the gamma and epsilon chains, while a peripheral stalk is formed by the delta, b and b' chains.

The protein localises to the plastid membrane. Functionally, f(1)F(0) ATP synthase produces ATP from ADP in the presence of a proton or sodium gradient. F-type ATPases consist of two structural domains, F(1) containing the extramembraneous catalytic core and F(0) containing the membrane proton channel, linked together by a central stalk and a peripheral stalk. During catalysis, ATP synthesis in the catalytic domain of F(1) is coupled via a rotary mechanism of the central stalk subunits to proton translocation. In terms of biological role, component of the F(0) channel, it forms part of the peripheral stalk, linking F(1) to F(0). The sequence is that of ATP synthase subunit b, plastid from Cuscuta gronovii (Common dodder).